The chain runs to 301 residues: Thiosulfate sulfurtransferase (301 aa).

Rhodanese domains lie at 31-138 (GSPG…DTSY) and 171-289 (QSGG…MPIE). The active-site Cysteine persulfide intermediate is cysteine 248. A substrate-binding site is contributed by arginine 253.

It catalyses the reaction thiosulfate + hydrogen cyanide = thiocyanate + sulfite + 2 H(+). The protein is Thiosulfate sulfurtransferase (thtR) of Corynebacterium glutamicum (strain ATCC 13032 / DSM 20300 / JCM 1318 / BCRC 11384 / CCUG 27702 / LMG 3730 / NBRC 12168 / NCIMB 10025 / NRRL B-2784 / 534).